A 113-amino-acid polypeptide reads, in one-letter code: Death-associated protein-like 1.L (113 aa).

The disordered stretch occupies residues 1–57; sequence MAKEQKMQSSPQALKAGHLPAVKAGGMRVSKKQGNEENSAPEKNAKKTLQEKPSSVL.

This sequence belongs to the DAP-DAPL1 family. As to quaternary structure, associates with ribosomes; preventing translation. Interacts with eiF5a (eif5a and eif5a2); preventing translation.

Its function is as follows. Ribosome-binding protein that promotes ribosome hibernation, a process during which ribosomes are stabilized in an inactive state and preserved from proteasomal degradation. Acts via its association with eiF5a (eif5a and eif5a2) at the polypeptide exit tunnel of the ribosome, preventing mRNA translation. Plays a key role in ribosome hibernation in the mature egg by preventing mRNA translation, leading to ribosome inactivation. Ribosomes, which are produced in large quantities during oogenesis, are stored and translationally repressed in the egg and early embryo. The chain is Death-associated protein-like 1.L (dapl1.L) from Xenopus laevis (African clawed frog).